The sequence spans 88 residues: DNA-directed RNA polymerase subunit omega (88 aa).

Belongs to the RNA polymerase subunit omega family. The RNAP catalytic core consists of 2 alpha, 1 beta, 1 beta' and 1 omega subunit. When a sigma factor is associated with the core the holoenzyme is formed, which can initiate transcription.

It carries out the reaction RNA(n) + a ribonucleoside 5'-triphosphate = RNA(n+1) + diphosphate. Promotes RNA polymerase assembly. Latches the N- and C-terminal regions of the beta' subunit thereby facilitating its interaction with the beta and alpha subunits. This Pseudomonas aeruginosa (strain LESB58) protein is DNA-directed RNA polymerase subunit omega.